Reading from the N-terminus, the 624-residue chain is Phragmoplastin DRP1E (624 aa).

Thr-2 bears the N-acetylthreonine mark. In terms of domain architecture, Dynamin-type G spans 37–306 (WEALPTVAVV…LESVIRTRIP (270 aa)). Positions 47 to 54 (GGQSSGKS) are G1 motif. GTP is bound at residue 50–55 (SSGKSS). The tract at residues 73–75 (VTR) is G2 motif. A G3 motif region spans residues 148–151 (DLPG). Residues 217 to 220 (TKLD) form a G4 motif region. GTP-binding positions include 218–223 (KLDLMD) and 248–251 (NRSQ). Residues 247–250 (VNRS) are G5 motif. A GED domain is found at 532–624 (FRRIASNVSA…DEIDAVAWVR (93 aa)).

Belongs to the TRAFAC class dynamin-like GTPase superfamily. Dynamin/Fzo/YdjA family. Forms homodimer and may homooligomerize and heterooligomerize to form the phragmoplastin complex. Binds to PHIP1. Ubiquitous.

It localises to the cytoplasm. Its subcellular location is the cytoskeleton. It is found in the phragmoplast. The catalysed reaction is GTP + H2O = GDP + phosphate + H(+). In terms of biological role, microtubule-associated force-producing protein that is targeted to the tubulo-vesicular network of the forming cell plate during cytokinesis. Also plays a major role in plasma membrane maintenance and cell wall integrity with an implication in vesicular trafficking, polar cell expansion, and other aspects of plant growth and development. Has a GTPase activity. This chain is Phragmoplastin DRP1E, found in Arabidopsis thaliana (Mouse-ear cress).